Consider the following 716-residue polypeptide: tRNA(Met) cytidine acetyltransferase TmcA (716 aa).

ATP-binding positions include Gln-192, 217-226 (GRGKSYVIGL), and Arg-364. Residues 401-567 (REVLARDREV…KNVALAKPLD (167 aa)) form the N-acetyltransferase domain. Acetyl-CoA contacts are provided by residues 493-495 (IAV) and 500-506 (QRRGLGS).

The protein belongs to the RNA cytidine acetyltransferase family. TmcA subfamily.

It is found in the cytoplasm. It carries out the reaction cytidine(34) in elongator tRNA(Met) + acetyl-CoA + ATP + H2O = N(4)-acetylcytidine(34) in elongator tRNA(Met) + ADP + phosphate + CoA + H(+). Functionally, catalyzes the formation of N(4)-acetylcytidine (ac(4)C) at the wobble position of tRNA(Met), by using acetyl-CoA as an acetyl donor and ATP (or GTP). This is tRNA(Met) cytidine acetyltransferase TmcA from Aeropyrum pernix (strain ATCC 700893 / DSM 11879 / JCM 9820 / NBRC 100138 / K1).